The chain runs to 689 residues: Methionine--tRNA ligase (689 aa).

The 'HIGH' region signature appears at 16-26 (PYANAGLHLGH). Zn(2+)-binding residues include Cys147, Cys150, Cys160, and Cys163. The short motif at 342–346 (KMSKS) is the 'KMSKS' region element. Lys345 lines the ATP pocket. The 105-residue stretch at 585–689 (DFAKVDLRVG…AGVKPGMRVG (105 aa)) folds into the tRNA-binding domain.

The protein belongs to the class-I aminoacyl-tRNA synthetase family. MetG type 1 subfamily. As to quaternary structure, homodimer. It depends on Zn(2+) as a cofactor.

It localises to the cytoplasm. The enzyme catalyses tRNA(Met) + L-methionine + ATP = L-methionyl-tRNA(Met) + AMP + diphosphate. Functionally, is required not only for elongation of protein synthesis but also for the initiation of all mRNA translation through initiator tRNA(fMet) aminoacylation. The chain is Methionine--tRNA ligase from Chromobacterium violaceum (strain ATCC 12472 / DSM 30191 / JCM 1249 / CCUG 213 / NBRC 12614 / NCIMB 9131 / NCTC 9757 / MK).